Reading from the N-terminus, the 824-residue chain is Leucine--tRNA ligase (824 aa).

Residues 42–52 (PYPSGRIHMGH) carry the 'HIGH' region motif. The 'KMSKS' region signature appears at 581-585 (KMSKS). K584 is a binding site for ATP.

It belongs to the class-I aminoacyl-tRNA synthetase family.

It is found in the cytoplasm. It carries out the reaction tRNA(Leu) + L-leucine + ATP = L-leucyl-tRNA(Leu) + AMP + diphosphate. The sequence is that of Leucine--tRNA ligase from Geotalea daltonii (strain DSM 22248 / JCM 15807 / FRC-32) (Geobacter daltonii).